The following is a 135-amino-acid chain: Large ribosomal subunit protein uL18 (135 aa).

Residues 1-23 (MSQTANQKAKRIPLGKDASTKRR) form a disordered region.

This sequence belongs to the universal ribosomal protein uL18 family. As to quaternary structure, part of the 50S ribosomal subunit; part of the 5S rRNA/L5/L18/L25 subcomplex. Contacts the 5S and 23S rRNAs.

Functionally, this is one of the proteins that bind and probably mediate the attachment of the 5S RNA into the large ribosomal subunit, where it forms part of the central protuberance. In Rhodococcus jostii (strain RHA1), this protein is Large ribosomal subunit protein uL18.